The chain runs to 421 residues: MRTLKLIILLILSTFKTINSTNIKISECGKARCVPNGESSTDGGQCGLPLPGVIGTAALNVFAFDKGSRCGECYELTGPLGSTVVMITDGCDAGDACQQKELFNFIISKKDFNKIGNSSAYGNIYSLGYQKVSCGFSGYIKAVFGGGSIAGRPDYSYYFHVSFSNFNIGIKQVQLMGTGMSRISTLKRDLGKYTWNQEGGGAKLQFPATLILTGIDGQTLSYKFNKPPSGQMIDIKKQFAPPTQKSSSALVLRESEKKCEMGKLPDYVYQESLGLGWVTYFSWKFDYINLESHETNKKASMGKKLIQVELKGYGGLHFTREGGFQTKYIKSLSFTIRAAPPISALQVYVGQVGSYTLPTLGWQWTEITIPASKIKSKNDIEYSLSFYNNKNQTNTLWIDNIKWNFTPDCPPTPAFVTDKFI.

The N-terminal stretch at 1–20 (MRTLKLIILLILSTFKTINS) is a signal peptide. An N-linked (GlcNAc...) asparagine glycan is attached at asparagine 19. The region spanning 43–139 (GGQCGLPLPG…QKVSCGFSGY (97 aa)) is the Expansin-like EG45 domain. 2 disulfide bridges follow: cysteine 46-cysteine 70 and cysteine 73-cysteine 134. N-linked (GlcNAc...) asparagine glycosylation is found at asparagine 117 and asparagine 391.

This sequence belongs to the expansin family. Expansin A subfamily.

It is found in the secreted. In terms of biological role, may serve to lubricate the movement of the cellulose microfibrils during cell growth and wall extension and/or may serve to maintain the fluid state of the slug cell wall. This Dictyostelium discoideum (Social amoeba) protein is Expansin-like protein DDB_G0293186.